The primary structure comprises 296 residues: Ribosomal RNA small subunit methyltransferase A (296 aa).

S-adenosyl-L-methionine contacts are provided by N31, L33, G58, E79, D111, and N136.

Belongs to the class I-like SAM-binding methyltransferase superfamily. rRNA adenine N(6)-methyltransferase family. RsmA subfamily.

It is found in the cytoplasm. The catalysed reaction is adenosine(1518)/adenosine(1519) in 16S rRNA + 4 S-adenosyl-L-methionine = N(6)-dimethyladenosine(1518)/N(6)-dimethyladenosine(1519) in 16S rRNA + 4 S-adenosyl-L-homocysteine + 4 H(+). Functionally, specifically dimethylates two adjacent adenosines (A1518 and A1519) in the loop of a conserved hairpin near the 3'-end of 16S rRNA in the 30S particle. May play a critical role in biogenesis of 30S subunits. This chain is Ribosomal RNA small subunit methyltransferase A, found in Lactobacillus delbrueckii subsp. bulgaricus (strain ATCC BAA-365 / Lb-18).